Consider the following 258-residue polypeptide: Envelope glycoprotein L (258 aa).

The first 31 residues, 1 to 31 (MYECMFFSHRLTIGFYIPLIVLTTMSSLSES), serve as a signal peptide directing secretion. The 208-residue stretch at 36-243 (QKTACTVAAI…ILYQASLSGP (208 aa)) folds into the gL betaherpesvirus-type domain. Cysteines 145 and 150 form a disulfide.

The protein belongs to the herpesviridae glycoprotein L (gL) family. Betaherpesvirinae gL subfamily. In terms of assembly, interacts with glycoprotein H (gH); this interaction is necessary for the correct processing and cell surface expression of gH. Forms the envelope pentamer complex (PC) composed of gH, gL, UL128, UL130, and UL131A. The pentamer interacts with host NRP2. Forms the envelope trimer complex composed of gH, gL, and gO. The trimer interacts with host PDGFRA.

It is found in the virion membrane. It localises to the host cell membrane. The protein localises to the host Golgi apparatus. The protein resides in the host trans-Golgi network. In terms of biological role, the heterodimer glycoprotein H-glycoprotein L is required for the fusion of viral and plasma membranes leading to virus entry into the host cell. Acts as a functional inhibitor of gH and maintains gH in an inhibited form. Upon binding to host integrins, gL dissociates from gH leading to activation of the viral fusion glycoproteins gB and gH. In human cytomegalovirus, forms two distincts complexes to mediate viral entry, a trimer and a pentamer at the surface of the virion envelope. The gH-gL-gO trimer is required for infection in fibroblasts by interacting with host PDGFRA. The gH-gL-UL128-UL130-UL131A pentamer is essential for viral entry in epithelial, endothelial and myeloid cells via interaction with host NRP2. This is Envelope glycoprotein L from Guinea pig cytomegalovirus (strain 22122) (GPCMV).